Reading from the N-terminus, the 68-residue chain is Urocalcin (68 aa).

An N-terminal signal peptide occupies residues 1–27; the sequence is MKASTLVVIFIVIFITISSFSIHDVQA. The propeptide occupies 28–35; that stretch reads SGVEKREQ. 3 cysteine pairs are disulfide-bonded: C38-C52, C45-C56, and C51-C67. The essential for stimulation of [3H]ryanodine binding to RYR1 stretch occupies residues 57–59; it reads KRR.

The protein belongs to the scorpion calcin family. Expressed by the venom gland.

The protein resides in the secreted. This toxin only weakly stabilizes ryanodine receptor 1 (RyR1) opening in a long-lasting subconductance state (55% of the full conductance state obtained only at high concentrations (1 uM)). In addition, it has been shown to dose-dependently stimulate ryanodine binding to RyR1 with the lowest activity of all calcins (EC(50)=376 nM). It also augments the bell-shaped calcium-[3H]ryanodine binding curve that is maximal at about 10 uM calcium concentration. It binds a different site as ryanodine. It acts synergistically with caffeine. In contrast to other calcins, it does not trigger calcium release from sarcoplasmic vesicles even at high concentration (1 uM). In vivo, intracerebroventricular injection into mice induces neurotoxic symptoms, followed by death. This is Urocalcin from Urodacus yaschenkoi (Inland robust scorpion).